The following is a 92-amino-acid chain: Small ribosomal subunit protein uS19 (92 aa).

This sequence belongs to the universal ribosomal protein uS19 family.

In terms of biological role, protein S19 forms a complex with S13 that binds strongly to the 16S ribosomal RNA. This Vibrio vulnificus (strain CMCP6) protein is Small ribosomal subunit protein uS19.